Consider the following 860-residue polypeptide: Linoleate 9S-lipoxygenase A (860 aa).

Positions 29 to 159 (NALDFTDLAG…RYKSDRIFFA (131 aa)) constitute a PLAT domain. A Lipoxygenase domain is found at 162–860 (PYLPSETPEL…GKGIPNSVSI (699 aa)). A disordered region spans residues 209 to 246 (PDQGKENVRTTLGGSADYPYPRRGRTGRPPTRTDPKSE). Fe cation contacts are provided by His-521, His-526, His-712, Asn-716, and Ile-860.

It belongs to the lipoxygenase family. As to quaternary structure, monomer. Requires Fe cation as cofactor. As to expression, expressed in germinating seeds as well as in ripening fruit.

The protein localises to the cytoplasm. It catalyses the reaction (9Z,12Z)-octadecadienoate + O2 = (9S)-hydroperoxy-(10E,12Z)-octadecadienoate. Its pathway is lipid metabolism; oxylipin biosynthesis. Its function is as follows. Plant lipoxygenase may be involved in a number of diverse aspects of plant physiology including growth and development, pest resistance, and senescence or responses to wounding. It catalyzes the hydroperoxidation of lipids containing a cis,cis-1,4-pentadiene structure. The sequence is that of Linoleate 9S-lipoxygenase A (LOX1.1) from Solanum lycopersicum (Tomato).